The chain runs to 931 residues: Chitin synthase 7 (931 aa).

2 disordered regions span residues 1–34 and 56–92; these read MVRHDPFTNSVSEDSSFTPSVNPSTPYPQSGHYR and GDVGYGGRSRRHGSWASVNNEDNEELTPLTTGPASSS. Polar residues-rich tracts occupy residues 7 to 28 and 83 to 92; these read FTNSVSEDSSFTPSVNPSTPYP and PLTTGPASSS. The N-linked (GlcNAc...) asparagine glycan is linked to Asn536. 3 helical membrane passes run 573 to 593, 615 to 635, and 647 to 667; these read IFSLIFSWFALANLWLTFSII, INLVFAWVYLAFLMLQLVLAL, and ILTLWVYAFLSFYLIVCSIIL. A glycan (N-linked (GlcNAc...) asparagine) is linked at Asn691. A run of 2 helical transmembrane segments spans residues 695–715 and 725–745; these read GVLVAAIMSTIGIYLIASFLY and FPQYMLLAPSFTNVLNIYAFC. Residues 763-789 are disordered; it reads LPAISSSKQKDGETAVVEEQQRSQGEL. An N-linked (GlcNAc...) asparagine glycan is attached at Asn819. A helical membrane pass occupies residues 826–846; that stretch reads LVVVWLLTNAALAISIQTLNG. Residues Asn866 and Asn874 are each glycosylated (N-linked (GlcNAc...) asparagine). A helical transmembrane segment spans residues 899 to 919; it reads AILWTTFALSMVRFIGCVFYW.

Belongs to the chitin synthase family. Class III subfamily.

The protein resides in the cell membrane. It catalyses the reaction [(1-&gt;4)-N-acetyl-beta-D-glucosaminyl](n) + UDP-N-acetyl-alpha-D-glucosamine = [(1-&gt;4)-N-acetyl-beta-D-glucosaminyl](n+1) + UDP + H(+). Functionally, polymerizes chitin, a structural polymer of the cell wall and septum, by transferring the sugar moiety of UDP-GlcNAc to the non-reducing end of the growing chitin polymer. The protein is Chitin synthase 7 of Cryptococcus neoformans var. grubii serotype A (strain H99 / ATCC 208821 / CBS 10515 / FGSC 9487) (Filobasidiella neoformans var. grubii).